The primary structure comprises 181 residues: MFNRAVSRLSRKRPPSDIHDSDGSSSSSHQSLKSTAKWAASLENLLEDPEGVKRFREFLKKEFSEENVLFWLACEDFKKMQDKTQMQEKAKEIYMTFLSSKASSQVNVEGQSRLNEKILEEPHPLMFQKLQDQIFNLMKYDSYSRFLKSDLFLKHKRTEEEEEDLPDAQTAAKRASRIYNT.

Positions 1–32 (MFNRAVSRLSRKRPPSDIHDSDGSSSSSHQSL) are disordered. Over residues 23 to 32 (GSSSSSHQSL) the composition is skewed to low complexity. A phosphoserine mark is found at Ser-24 and Ser-41. The 116-residue stretch at 41–156 (SLENLLEDPE…LKSDLFLKHK (116 aa)) folds into the RGS domain. Residue Cys-74 is the site of S-palmitoyl cysteine attachment. The tract at residues 158-181 (TEEEEEDLPDAQTAAKRASRIYNT) is disordered. Ser-176 bears the Phosphoserine mark.

Interacts with GNAZ, GNAI1 and GNAI3. Associates specifically with the activated, GTP-bound forms of GNAZ and GNAI3.

The protein resides in the cytoplasm. The protein localises to the cytosol. It localises to the nucleus. Functionally, regulates G protein-coupled receptor signaling cascades, including signaling downstream of the muscarinic acetylcholine receptor CHRM2. Inhibits signal transduction by increasing the GTPase activity of G protein alpha subunits, thereby driving them into their inactive GDP-bound form. Modulates the activity of potassium channels that are activated in response to CHRM2 signaling. Activity on GNAZ is inhibited by palmitoylation of the G-protein. The chain is Regulator of G-protein signaling 10 (RGS10) from Homo sapiens (Human).